The chain runs to 82 residues: Penaeidin-3a (82 aa).

The first 19 residues, 1 to 19, serve as a signal peptide directing secretion; that stretch reads MRLVVCLVFLASFALVCQG. Pyrrolidone carboxylic acid is present on Gln-20. 3 disulfides stabilise this stretch: Cys-51–Cys-66, Cys-55–Cys-73, and Cys-67–Cys-74. Position 81 is a serine amide (Ser-81).

In terms of processing, the N-terminus forms pyrrolidone carboxylic acid. Higher expression in hemocytes and to a lesser extent in heart, testis, gills, intestine, lymphoid organ and hepatopancreas. Traces in eyes and subcuticular epithelium. Not present in the brain.

It is found in the cytoplasmic granule. In terms of biological role, antibacterial activity against M.luteus and E.coli bacteria. Antifungal activity against N.crassa and F.oxysporum. Presents chitin-binding activity. In Penaeus vannamei (Whiteleg shrimp), this protein is Penaeidin-3a.